The sequence spans 522 residues: Serine/threonine-protein kinase BSK1-2 (522 aa).

The interval 1–54 (MGCCGSSLRVGSHAPEKPPRRARPPPPPPQPHHPRRPSFTLNAHQAAASSSAAS) is disordered. Glycine 2 is lipidated: N-myristoyl glycine. Positions 79-338 (ANIVSESGEK…KLVSILQPLQ (260 aa)) constitute a Protein kinase domain. ATP contacts are provided by residues 85–93 (SGEKAPNLV) and lysine 111. Aspartate 205 acts as the Proton acceptor in catalysis.

It belongs to the protein kinase superfamily. Ser/Thr protein kinase family.

It localises to the cell membrane. It catalyses the reaction L-seryl-[protein] + ATP = O-phospho-L-seryl-[protein] + ADP + H(+). It carries out the reaction L-threonyl-[protein] + ATP = O-phospho-L-threonyl-[protein] + ADP + H(+). In terms of biological role, probable serine/threonine kinase that functions as a positive regulator of plant immunity. May be involved in the regulation of pattern-triggered immunity (PTI). Does not seem to be involved in responses to brassinosteroid (BR) signaling. The polypeptide is Serine/threonine-protein kinase BSK1-2 (Oryza sativa subsp. japonica (Rice)).